Here is a 161-residue protein sequence, read N- to C-terminus: Probable metalloprotease HVO_1016 (161 aa).

In terms of domain architecture, MPN spans 10–131 (VGIAADALDF…WEAFDQSGEV (122 aa)). Glu-31 (proton donor/acceptor) is an active-site residue. Zn(2+) contacts are provided by His-87, His-89, and Asp-100. A JAMM motif motif is present at residues 87 to 100 (HSHPNGVLRPSDAD).

It belongs to the peptidase M67B family. As to quaternary structure, monomer and homodimer. Zn(2+) is required as a cofactor.

Probable metalloprotease. Does not hydrolyze SAMP1- and SAMP2-protein conjugates, diglycine-AMC, Ub-AMC, hemoglobin, cytochrome c, carbonic anhydrase, creatinine phosphokinase, beta-amylase and bovine serum albumin. The protein is Probable metalloprotease HVO_1016 of Haloferax volcanii (strain ATCC 29605 / DSM 3757 / JCM 8879 / NBRC 14742 / NCIMB 2012 / VKM B-1768 / DS2) (Halobacterium volcanii).